The primary structure comprises 329 residues: Protein phosphatase 1 regulatory subunit 42 (329 aa).

LRR repeat units follow at residues Lys-30–Arg-51, Asn-52–Ser-73, Asn-74–His-95, Lys-96–Lys-117, Ser-118–Pro-139, Thr-148–Arg-169, and Lys-170–Phe-191. The region spanning Asn-205 to Trp-243 is the LRRCT domain. Residues Ser-268 to Ile-329 are disordered. Residues Gly-318–Ile-329 are compositionally biased toward polar residues.

Its subcellular location is the cytoplasm. The protein resides in the cytoskeleton. It localises to the microtubule organizing center. The protein localises to the centrosome. May regulate phosphatase activity of protein phosphatase 1 (PP1) complexes. This is Protein phosphatase 1 regulatory subunit 42 (ppp1r42) from Danio rerio (Zebrafish).